The following is a 155-amino-acid chain: Leader peptidase HopD (155 aa).

It belongs to the peptidase A24 family.

The chain is Leader peptidase HopD (hopD) from Escherichia coli.